Reading from the N-terminus, the 209-residue chain is Molybdenum cofactor guanylyltransferase (209 aa).

GTP contacts are provided by residues 13 to 15 (LAG), lysine 26, asparagine 54, aspartate 74, and aspartate 104. Aspartate 104 is a Mg(2+) binding site.

The protein belongs to the MobA family. As to quaternary structure, monomer. Mg(2+) is required as a cofactor.

It is found in the cytoplasm. It catalyses the reaction Mo-molybdopterin + GTP + H(+) = Mo-molybdopterin guanine dinucleotide + diphosphate. In terms of biological role, transfers a GMP moiety from GTP to Mo-molybdopterin (Mo-MPT) cofactor (Moco or molybdenum cofactor) to form Mo-molybdopterin guanine dinucleotide (Mo-MGD) cofactor. This Acinetobacter baumannii (strain ACICU) protein is Molybdenum cofactor guanylyltransferase.